A 1828-amino-acid chain; its full sequence is AT-rich interactive domain-containing protein 2 (1828 aa).

Residue Ala-2 is modified to N-acetylalanine. The residue at position 4 (Ser-4) is a Phosphoserine. Residues Lys-7, Lys-15, and Lys-119 each participate in a glycyl lysine isopeptide (Lys-Gly) (interchain with G-Cter in SUMO2) cross-link. One can recognise an ARID domain in the interval 13 to 105; sequence RRKGLAFLDE…YLEKYEKVHH (93 aa). The LXXLL motif lies at 313-317; sequence LRFLL. The segment at residues 524-603 is a DNA-binding region (RFX-type winged-helix); sequence ACQWLNAHFE…IHVIGVKRRA (80 aa). Lys-555 is covalently cross-linked (Glycyl lysine isopeptide (Lys-Gly) (interchain with G-Cter in SUMO2)). Phosphoserine is present on residues Ser-631 and Ser-635. Residue Thr-653 is modified to Phosphothreonine. Residue Ser-689 is modified to Phosphoserine. Phosphothreonine is present on Thr-692. 6 disordered regions span residues 824–843, 962–1028, 1245–1339, 1360–1462, 1483–1503, and 1566–1618; these read TSPQ…SQPQ, LTGQ…QVQV, KEAT…EPVD, KGDG…RPSV, HSGP…TNGT, and SAAQ…HADP. Residues 987-1011 show a composition bias toward polar residues; that stretch reads AMSSSSTLQSQGPPPTVSQMLSVKR. Over residues 1012–1028 the composition is skewed to low complexity; it reads QQQQQHSPAAPAQQVQV. A compositionally biased stretch (basic and acidic residues) spans 1245-1259; it reads KEATGLHVHERKIEV. The segment covering 1267-1283 has biased composition (polar residues); sequence RGTTNTSNGDTSESELQ. The residue at position 1294 (Ser-1294) is a Phosphoserine. Composition is skewed to polar residues over residues 1295–1320 and 1366–1379; these read DSSL…SNGP and LSKN…SNHV. A Phosphoserine modification is found at Ser-1385. 2 stretches are compositionally biased toward polar residues: residues 1390–1400 and 1419–1428; these read QGTSGATQQDT and GSPSTSSMQE. Residues 1453-1462 show a composition bias toward low complexity; sequence SDVPQQRPSV. Residue Ser-1491 is modified to Phosphoserine. Polar residues-rich tracts occupy residues 1491-1503 and 1567-1586; these read SALS…TNGT and AAQQ…APQN. Residues 1594-1614 show a composition bias toward low complexity; that stretch reads AVQVQGQPSSSQPSPVSASSQ. Residues 1626 to 1651 form a C2H2-type zinc finger; the sequence is FMCLWQSCKKWFQTPSQVFYHAATEH. Glycyl lysine isopeptide (Lys-Gly) (interchain with G-Cter in SUMO2) cross-links involve residues Lys-1695, Lys-1710, and Lys-1725. The disordered stretch occupies residues 1697-1726; the sequence is DEPGQVANQKSSTKQPTVGGTGSAPRAQKA. The segment covering 1702–1714 has biased composition (polar residues); that stretch reads VANQKSSTKQPTV.

This sequence belongs to the RFX family. In terms of assembly, component of the SWI/SNF-B (PBAF) chromatin remodeling complex, at least composed of SMARCA4/BRG1, SMARCB1/BAF47/SNF5, ACTL6A/BAF53A or ACTL6B/BAF53B, SMARCE1/BAF57, SMARCD1/BAF60A, SMARCD2/BAF60B, perhaps SMARCD3/BAF60C, SMARCC1/BAF155, SMARCC2/BAF170, PBRM1/BAF180, ARID2/BAF200 and actin. Interacts with SRF. Forms complexes with SRF and SRF cofactors MYOCD, NKX2-5 and SRFBP1. In terms of tissue distribution, highly expressed in testis, expressed in heart, liver and kidney.

Its subcellular location is the nucleus. Functionally, involved in transcriptional activation and repression of select genes by chromatin remodeling (alteration of DNA-nucleosome topology). Required for the stability of the SWI/SNF chromatin remodeling complex SWI/SNF-B (PBAF). May be involved in targeting the complex to different genes. May be involved in regulating transcriptional activation of cardiac genes. This is AT-rich interactive domain-containing protein 2 from Mus musculus (Mouse).